Here is a 190-residue protein sequence, read N- to C-terminus: MAQNDPGSGNLMDEFEEAFQSCLLSLTKQEPNSGTNKEEIELEVQKTTNRFIDVARQMEAFFLQKRFLVSTLKPYMLIKDENQDLSIEIQRKEALLQKHYNRLEEWKACLSDIQQGVHNRPTPPINPGMLQGPSGMQQPMGGGVPPRPGLMPGMPPGGMSPVGPMPPGQQHMLQAQQMQQLRMMGKLPPK.

Residues 76-108 (MLIKDENQDLSIEIQRKEALLQKHYNRLEEWKA) are a coiled coil.

It belongs to the Mediator complex subunit 28 family. In terms of assembly, component of the Mediator complex.

Its subcellular location is the nucleus. Component of the Mediator complex, a coactivator involved in the regulated transcription of nearly all RNA polymerase II-dependent genes. Mediator functions as a bridge to convey information from gene-specific regulatory proteins to the basal RNA polymerase II transcription machinery. Mediator is recruited to promoters by direct interactions with regulatory proteins and serves as a scaffold for the assembly of a functional preinitiation complex with RNA polymerase II and the general transcription factors. The protein is Mediator of RNA polymerase II transcription subunit 28 (MED28) of Drosophila pseudoobscura pseudoobscura (Fruit fly).